Here is a 369-residue protein sequence, read N- to C-terminus: Peptide chain release factor subunit 1 (369 aa).

The protein belongs to the eukaryotic release factor 1 family. As to quaternary structure, heterodimer of two subunits, one of which binds GTP.

It is found in the cytoplasm. In terms of biological role, directs the termination of nascent peptide synthesis (translation) in response to the termination codons UAA, UAG and UGA. The sequence is that of Peptide chain release factor subunit 1 (prf1) from Saccharolobus solfataricus (strain ATCC 35092 / DSM 1617 / JCM 11322 / P2) (Sulfolobus solfataricus).